The sequence spans 215 residues: MOB kinase activator-like 1B (215 aa).

Positions 1 to 29 (MSLFGLGSRNQKTFRPKKSAPTGSKGAQL) are disordered. Positions 80, 85, 162, and 167 each coordinate Zn(2+).

The protein belongs to the MOB1/phocein family. Constitutively expressed with higher expression in roots, flowers and pods than in leaves and stems.

The protein resides in the cytoplasm. It is found in the cytoskeleton. It localises to the phragmoplast. The sequence is that of MOB kinase activator-like 1B from Medicago sativa subsp. falcata (Sickle medic).